A 534-amino-acid polypeptide reads, in one-letter code: CTP synthase (534 aa).

Residues 1-265 (MKYIVVTGGV…TTQLMKHLRL (265 aa)) form an amidoligase domain region. S12 lines the CTP pocket. Residue S12 coordinates UTP. 13 to 18 (GLGKGI) contributes to the ATP binding site. Position 53 (Y53) interacts with L-glutamine. Residue D70 coordinates ATP. Positions 70 and 140 each coordinate Mg(2+). CTP-binding positions include 147–149 (DIE), 186–191 (KTKPTQ), and K222. UTP contacts are provided by residues 186–191 (KTKPTQ) and K222. In terms of domain architecture, Glutamine amidotransferase type-1 spans 289–530 (KLAIVGKYTN…VRAMCKYRKE (242 aa)). G352 contacts L-glutamine. The active-site Nucleophile; for glutamine hydrolysis is the C379. L-glutamine contacts are provided by residues 380-383 (LGMQ), E403, and R460. Catalysis depends on residues H503 and E505.

The protein belongs to the CTP synthase family. As to quaternary structure, homotetramer.

The enzyme catalyses UTP + L-glutamine + ATP + H2O = CTP + L-glutamate + ADP + phosphate + 2 H(+). It carries out the reaction L-glutamine + H2O = L-glutamate + NH4(+). The catalysed reaction is UTP + NH4(+) + ATP = CTP + ADP + phosphate + 2 H(+). The protein operates within pyrimidine metabolism; CTP biosynthesis via de novo pathway; CTP from UDP: step 2/2. Allosterically activated by GTP, when glutamine is the substrate; GTP has no effect on the reaction when ammonia is the substrate. The allosteric effector GTP functions by stabilizing the protein conformation that binds the tetrahedral intermediate(s) formed during glutamine hydrolysis. Inhibited by the product CTP, via allosteric rather than competitive inhibition. In terms of biological role, catalyzes the ATP-dependent amination of UTP to CTP with either L-glutamine or ammonia as the source of nitrogen. Regulates intracellular CTP levels through interactions with the four ribonucleotide triphosphates. This Methanosarcina mazei (strain ATCC BAA-159 / DSM 3647 / Goe1 / Go1 / JCM 11833 / OCM 88) (Methanosarcina frisia) protein is CTP synthase.